A 520-amino-acid chain; its full sequence is Biotinidase (520 aa).

Positions 1 to 21 (MSGARTAPALFFLGCSALALG) are cleaved as a signal peptide. In terms of domain architecture, CN hydrolase spans 49–333 (NPLELVSRQE…TGNTTSEMDP (285 aa)). Glu89 acts as the Proton acceptor in catalysis. Asn96, Asn127, and Asn180 each carry an N-linked (GlcNAc...) asparagine glycan. Lys189 serves as the catalytic Proton donor. Catalysis depends on Cys222, which acts as the Nucleophile. Asn326, Asn379, and Asn466 each carry an N-linked (GlcNAc...) asparagine glycan.

This sequence belongs to the carbon-nitrogen hydrolase superfamily. BTD/VNN family.

It is found in the secreted. The protein resides in the extracellular space. It carries out the reaction biocytin + H2O = biotin + L-lysine. The enzyme catalyses biotin amide + H2O = biotin + NH4(+). Its function is as follows. Catalytic release of biotin from biocytin, the product of biotin-dependent carboxylases degradation. This is Biotinidase (Btd) from Mus musculus (Mouse).